The chain runs to 1415 residues: DNA-directed RNA polymerase subunit beta'' (1415 aa).

Residues Cys-217, Cys-291, Cys-298, and Cys-301 each contribute to the Zn(2+) site.

This sequence belongs to the RNA polymerase beta' chain family. RpoC2 subfamily. In terms of assembly, in plastids the minimal PEP RNA polymerase catalytic core is composed of four subunits: alpha, beta, beta', and beta''. When a (nuclear-encoded) sigma factor is associated with the core the holoenzyme is formed, which can initiate transcription. Zn(2+) is required as a cofactor.

It localises to the plastid. It is found in the chloroplast. It carries out the reaction RNA(n) + a ribonucleoside 5'-triphosphate = RNA(n+1) + diphosphate. Functionally, DNA-dependent RNA polymerase catalyzes the transcription of DNA into RNA using the four ribonucleoside triphosphates as substrates. This chain is DNA-directed RNA polymerase subunit beta'', found in Phaeodactylum tricornutum (strain CCAP 1055/1).